Reading from the N-terminus, the 150-residue chain is Photosystem I reaction center subunit XI (150 aa).

At 1-72 (MSDFIQSYNN…DKLGPLRNTD (72 aa)) the chain is on the stromal side. Residues 73 to 93 (VALLSGFLSAVGLIIILTVCL) traverse the membrane as a helical segment. At 94–118 (SMYGNVSFDKDDAKDLLQTTEGWGQ) the chain is on the lumenal side. A helical transmembrane segment spans residues 119–139 (FTAGFLVGAVGGSGFAYLLLA). At 140–150 (NIPVLQNLGLS) the chain is on the stromal side.

The protein belongs to the PsaL family.

The protein localises to the plastid. The protein resides in the chloroplast thylakoid membrane. The polypeptide is Photosystem I reaction center subunit XI (Gracilaria tenuistipitata var. liui (Red alga)).